Reading from the N-terminus, the 398-residue chain is MSEQLLTASTPIDAAPLSDNTVQTTAPATSKINLLDLNRQQMREFFAEMGEKPFRADQVMKWMYHYCYDDFEQMTDINKGLRAKLQRVAEIRAPEVAEEQRSVDGTIKWAIKVGDQQVETVYIPEADRATLCVSSQVGCALECKFCSTAQQGFNRNLRVSEIIGQVWRAAKIIGSLKSTGTRPITNVVMMGMGEPLLNLNNVVPAMDIMMDDFGFGLSKRRVTLSTSGVVPALDKLGDMIDVALAISLHAPTDDIRDEIVPINRKYNIEMFLAAVRRYLDKSKANGGRVTVEYVMLDHINDSTEQAHQLAECLKDTPCKINLIPWNPFPGAPYGRSSNSRVDRFSKVLMEYGFTTIVRKTRGDDIDAACGQLAGEVIDRTKRTLKKKMAGEPIAIKTV.

Glutamate 119 functions as the Proton acceptor in the catalytic mechanism. Residues 125–364 (EADRATLCVS…TIVRKTRGDD (240 aa)) enclose the Radical SAM core domain. Cysteine 132 and cysteine 369 are joined by a disulfide. Cysteine 139, cysteine 143, and cysteine 146 together coordinate [4Fe-4S] cluster. S-adenosyl-L-methionine contacts are provided by residues 193-194 (GE), serine 225, 247-249 (SLH), and asparagine 326. The active-site S-methylcysteine intermediate is the cysteine 369.

It belongs to the radical SAM superfamily. RlmN family. Requires [4Fe-4S] cluster as cofactor.

It localises to the cytoplasm. The catalysed reaction is adenosine(2503) in 23S rRNA + 2 reduced [2Fe-2S]-[ferredoxin] + 2 S-adenosyl-L-methionine = 2-methyladenosine(2503) in 23S rRNA + 5'-deoxyadenosine + L-methionine + 2 oxidized [2Fe-2S]-[ferredoxin] + S-adenosyl-L-homocysteine. It catalyses the reaction adenosine(37) in tRNA + 2 reduced [2Fe-2S]-[ferredoxin] + 2 S-adenosyl-L-methionine = 2-methyladenosine(37) in tRNA + 5'-deoxyadenosine + L-methionine + 2 oxidized [2Fe-2S]-[ferredoxin] + S-adenosyl-L-homocysteine. In terms of biological role, specifically methylates position 2 of adenine 2503 in 23S rRNA and position 2 of adenine 37 in tRNAs. m2A2503 modification seems to play a crucial role in the proofreading step occurring at the peptidyl transferase center and thus would serve to optimize ribosomal fidelity. The protein is Dual-specificity RNA methyltransferase RlmN of Yersinia pseudotuberculosis serotype IB (strain PB1/+).